We begin with the raw amino-acid sequence, 376 residues long: Alanine racemase (376 aa).

Catalysis depends on Lys-36, which acts as the Proton acceptor; specific for D-alanine. Lys-36 is subject to N6-(pyridoxal phosphate)lysine. Arg-134 lines the substrate pocket. The Proton acceptor; specific for L-alanine role is filled by Tyr-266. Position 314 (Met-314) interacts with substrate.

It belongs to the alanine racemase family. It depends on pyridoxal 5'-phosphate as a cofactor.

The catalysed reaction is L-alanine = D-alanine. The protein operates within amino-acid biosynthesis; D-alanine biosynthesis; D-alanine from L-alanine: step 1/1. Its function is as follows. Catalyzes the interconversion of L-alanine and D-alanine. May also act on other amino acids. This chain is Alanine racemase (alr), found in Nitratidesulfovibrio vulgaris (strain ATCC 29579 / DSM 644 / CCUG 34227 / NCIMB 8303 / VKM B-1760 / Hildenborough) (Desulfovibrio vulgaris).